We begin with the raw amino-acid sequence, 300 residues long: Cation-efflux pump FieF (300 aa).

4 helical membrane-spanning segments follow: residues 12-32 (AAIA…FAWW), 39-59 (ILAA…NLLV), 82-102 (AALA…LTGI), and 114-134 (PGVG…LVTF). Residues aspartate 45 and aspartate 49 each contribute to the Zn(2+) site. Positions 153 and 157 each coordinate Zn(2+). The helical transmembrane segment at 164 to 184 (ILVALGLAWYGWHRADALFAL) threads the bilayer.

The protein belongs to the cation diffusion facilitator (CDF) transporter (TC 2.A.4) family. FieF subfamily. As to quaternary structure, homodimer.

The protein resides in the cell inner membrane. It catalyses the reaction Zn(2+)(in) + H(+)(out) = Zn(2+)(out) + H(+)(in). It carries out the reaction Cd(2+)(in) + H(+)(out) = Cd(2+)(out) + H(+)(in). The enzyme catalyses Fe(2+)(in) + H(+)(out) = Fe(2+)(out) + H(+)(in). Divalent metal cation transporter which exports Zn(2+), Cd(2+) and possibly Fe(2+). May be involved in zinc and iron detoxification by efflux. The protein is Cation-efflux pump FieF of Citrobacter koseri (strain ATCC BAA-895 / CDC 4225-83 / SGSC4696).